The chain runs to 435 residues: MRHIAMKAQWTDFITLLKREVVPALGCTEPMSVALAAANCRKLLGQVPTRVSVWVSGNLFKNGMGVGVPGTGMIGLPVAAAVGITGGNPDAGLEVLKALTPAQVEEAKVLLPAIKVDVKDVPDVLYAEVLAQVEGHSARVVICTDHTRIILMERDGEVLMAQDSAPGVQIQAAPSSKPAMTLREIVEFALQVPLAEIDFIREAATMNQALADEGLQGYGLRIGKILTEQVERKLLSDDLMTLAMRLSSAASDARMDGAMLPAMSNSGSGNQGIAATMPVVAAARFLQASDEQLTRALVMSHLVAIYIKTYQNKLSALCAASTAAMGAGAAITWLLGGQFEQISHCINNMIGDVSGIICDGAGSACSMKVSTSTSAAVKSSLMAINNLHVPQSEGIVSDDVDQTIANLGRLSKQGMLDTDIEIINIMRAKQQGKAE.

It belongs to the UPF0597 family.

This chain is UPF0597 protein AHA_4077, found in Aeromonas hydrophila subsp. hydrophila (strain ATCC 7966 / DSM 30187 / BCRC 13018 / CCUG 14551 / JCM 1027 / KCTC 2358 / NCIMB 9240 / NCTC 8049).